We begin with the raw amino-acid sequence, 1786 residues long: Laminin subunit beta-1 (1786 aa).

The first 21 residues, 1 to 21, serve as a signal peptide directing secretion; sequence MGLLQVFAFGVLALWGTRVCA. The Laminin N-terminal domain occupies 31–270; the sequence is AEGSCYPATG…AVYDMVVRGN (240 aa). Residue Asn-120 is glycosylated (N-linked (GlcNAc...) asparagine). Ser-250 bears the Phosphoserine mark. Intrachain disulfides connect Cys-271-Cys-280, Cys-273-Cys-298, Cys-300-Cys-309, Cys-312-Cys-332, Cys-335-Cys-344, Cys-337-Cys-362, Cys-365-Cys-374, Cys-377-Cys-395, Cys-398-Cys-411, Cys-400-Cys-426, Cys-428-Cys-437, Cys-440-Cys-455, Cys-458-Cys-472, Cys-460-Cys-479, Cys-481-Cys-490, Cys-493-Cys-507, Cys-510-Cys-522, Cys-512-Cys-529, and Cys-531-Cys-540. 4 Laminin EGF-like domains span residues 271–334, 335–397, 398–457, and 458–509; these read CFCY…ACKK, CNCN…LCEP, CTCD…GCKS, and CACN…GCRP. The N-linked (GlcNAc...) asparagine glycan is linked to Asn-356. The Laminin EGF-like 5; truncated domain occupies 510–540; the sequence is CDCDLGGALNNSCSEDSGQCSCLPHMIGRQC. The N-linked (GlcNAc...) asparagine glycan is linked to Asn-519. The Laminin IV type B domain occupies 549–767; the sequence is FTTLDHYIYE…IIFSISALIH (219 aa). Asn-677 is a glycosylation site (N-linked (GlcNAc...) asparagine). Intrachain disulfides connect Cys-773–Cys-785, Cys-775–Cys-792, Cys-794–Cys-803, Cys-806–Cys-818, Cys-821–Cys-833, Cys-823–Cys-840, Cys-842–Cys-851, Cys-854–Cys-864, Cys-867–Cys-876, Cys-869–Cys-883, Cys-886–Cys-895, Cys-898–Cys-914, Cys-917–Cys-933, Cys-919–Cys-944, Cys-946–Cys-955, Cys-958–Cys-973, Cys-976–Cys-990, Cys-978–Cys-997, Cys-1000–Cys-1009, Cys-1012–Cys-1025, Cys-1028–Cys-1040, Cys-1030–Cys-1054, Cys-1056–Cys-1065, Cys-1068–Cys-1081, Cys-1084–Cys-1096, Cys-1086–Cys-1103, Cys-1105–Cys-1114, Cys-1117–Cys-1129, Cys-1132–Cys-1144, Cys-1134–Cys-1151, Cys-1153–Cys-1162, and Cys-1165–Cys-1176. 8 Laminin EGF-like domains span residues 773 to 820, 821 to 866, 867 to 916, 917 to 975, 976 to 1027, 1028 to 1083, 1084 to 1131, and 1132 to 1178; these read CECD…GCKP, CDCH…SCQP, CQCN…HCRP, CPCP…SCQP, CQCH…DCRK, CVCN…GCGP, CNCN…ECRA, and CDCD…DCTP. N-linked (GlcNAc...) asparagine glycosylation occurs at Asn-1041. Residues 1179–1397 are domain II; it reads CHQCFALWDA…LDLSAVAQMT (219 aa). Residues Asn-1195, Asn-1279, Asn-1336, and Asn-1343 are each glycosylated (N-linked (GlcNAc...) asparagine). Residues 1216-1315 adopt a coiled-coil conformation; sequence YRETVDSVEK…LEFIKNSDIQ (100 aa). Residues 1368–1388 adopt a coiled-coil conformation; the sequence is KEQQEEQARLLDELAGKLQSL. A domain alpha region spans residues 1398–1430; it reads CGTPPGADCSESECGGPNCRTDEGEKKCGGPGC. Positions 1431–1786 are domain I; the sequence is GGLVTVAHSA…EKVAVYSTCL (356 aa). A coiled-coil region spans residues 1448-1778; that stretch reads DRDVLSALAE…RSLLKDISEK (331 aa). An N-linked (GlcNAc...) asparagine glycan is attached at Asn-1487. At Ser-1496 the chain carries Phosphoserine. 2 N-linked (GlcNAc...) asparagine glycosylation sites follow: Asn-1542 and Asn-1643. A Phosphoserine modification is found at Ser-1666.

In terms of assembly, laminin is a complex glycoprotein, consisting of three different polypeptide chains (alpha, beta, gamma), which are bound to each other by disulfide bonds into a cross-shaped molecule comprising one long and three short arms with globules at each end. Beta-1 is a subunit of laminin-1 (laminin-111 or EHS laminin), laminin-2 (laminin-211 or merosin), laminin-6 (laminin-311 or K-laminin), laminin-8 (laminin-411), laminin-10 (laminin-511) and laminin-12 (laminin-213). Interacts with ITGB1. As to expression, widely expressed in the embryo. High levels are detected in the cerebellar basement membrane, at postnatal day 7.

Its subcellular location is the secreted. It is found in the extracellular space. It localises to the extracellular matrix. The protein localises to the basement membrane. Its function is as follows. Binding to cells via a high affinity receptor, laminin is thought to mediate the attachment, migration and organization of cells into tissues during embryonic development by interacting with other extracellular matrix components. Involved in the organization of the laminar architecture of the cerebral cortex. It is probably required for the integrity of the basement membrane/glia limitans that serves as an anchor point for the endfeet of radial glial cells and as a physical barrier to migrating neurons. Radial glial cells play a central role in cerebral cortical development, where they act both as the proliferative unit of the cerebral cortex and a scaffold for neurons migrating toward the pial surface. This is Laminin subunit beta-1 (Lamb1) from Mus musculus (Mouse).